Reading from the N-terminus, the 121-residue chain is UPF0344 protein BC_1150 (121 aa).

A run of 4 helical transmembrane segments spans residues 6-26 (ITAW…YSAG), 38-58 (LMYI…VKTA), 65-85 (WYGL…MVLV), and 92-112 (PTGA…YLGL).

This sequence belongs to the UPF0344 family.

The protein localises to the cell membrane. The polypeptide is UPF0344 protein BC_1150 (Bacillus cereus (strain ATCC 14579 / DSM 31 / CCUG 7414 / JCM 2152 / NBRC 15305 / NCIMB 9373 / NCTC 2599 / NRRL B-3711)).